The chain runs to 480 residues: Immune evasion protein OPG047 (480 aa).

The BTB domain maps to 10–90; it reads CKNILALSMT…SYTGKVYIDS (81 aa). The BACK domain maps to 125–223; the sequence is CVECYMMGIE…NYLSPRGINN (99 aa). Kelch repeat units follow at residues 273 to 319, 320 to 363, 365 to 408, 410 to 447, and 448 to 480; these read VVYL…PANN, KLYV…SINN, IYVM…VFGR, LFLV…IVDN, and KLLL…WDGK.

The protein belongs to the orthopoxvirus OPG047 family.

Might have a role in the suppression of host immune response. In Vaccinia virus (strain Copenhagen) (VACV), this protein is Immune evasion protein OPG047 (OPG047).